The primary structure comprises 116 residues: Large ribosomal subunit protein bL17 (116 aa).

It belongs to the bacterial ribosomal protein bL17 family. As to quaternary structure, part of the 50S ribosomal subunit. Contacts protein L32.

This chain is Large ribosomal subunit protein bL17, found in Dictyoglomus turgidum (strain DSM 6724 / Z-1310).